The primary structure comprises 512 residues: Glutamyl-tRNA(Gln) amidotransferase subunit A (512 aa).

Residues Lys-82 and Ser-157 each act as charge relay system in the active site. Catalysis depends on Ser-181, which acts as the Acyl-ester intermediate.

Belongs to the amidase family. GatA subfamily. In terms of assembly, heterotrimer of A, B and C subunits.

It carries out the reaction L-glutamyl-tRNA(Gln) + L-glutamine + ATP + H2O = L-glutaminyl-tRNA(Gln) + L-glutamate + ADP + phosphate + H(+). Its function is as follows. Allows the formation of correctly charged Gln-tRNA(Gln) through the transamidation of misacylated Glu-tRNA(Gln) in organisms which lack glutaminyl-tRNA synthetase. The reaction takes place in the presence of glutamine and ATP through an activated gamma-phospho-Glu-tRNA(Gln). This is Glutamyl-tRNA(Gln) amidotransferase subunit A from Bordetella petrii (strain ATCC BAA-461 / DSM 12804 / CCUG 43448).